The primary structure comprises 61 residues: Photosystem II reaction center protein K (61 aa).

Residues 1–24 constitute a propeptide that is removed on maturation; that stretch reads MLNIFSLICICLNSVLYSSSFFVA. The chain crosses the membrane as a helical span at residues 40–60; that stretch reads MPVIPVLFFLLAFVWQAAVSF.

This sequence belongs to the PsbK family. In terms of assembly, PSII is composed of 1 copy each of membrane proteins PsbA, PsbB, PsbC, PsbD, PsbE, PsbF, PsbH, PsbI, PsbJ, PsbK, PsbL, PsbM, PsbT, PsbX, PsbY, PsbZ, Psb30/Ycf12, at least 3 peripheral proteins of the oxygen-evolving complex and a large number of cofactors. It forms dimeric complexes.

The protein localises to the plastid. It is found in the chloroplast thylakoid membrane. In terms of biological role, one of the components of the core complex of photosystem II (PSII). PSII is a light-driven water:plastoquinone oxidoreductase that uses light energy to abstract electrons from H(2)O, generating O(2) and a proton gradient subsequently used for ATP formation. It consists of a core antenna complex that captures photons, and an electron transfer chain that converts photonic excitation into a charge separation. The polypeptide is Photosystem II reaction center protein K (Morus indica (Mulberry)).